Consider the following 391-residue polypeptide: Fructose-bisphosphate aldolase 3, chloroplastic (391 aa).

A chloroplast-targeting transit peptide spans Met1–Arg40. Position 88 (Arg88) interacts with substrate. Residue Ser150 is modified to Phosphoserine. Lys178 provides a ligand contact to substrate. Phosphoserine is present on Ser208. Glu218 (proton acceptor) is an active-site residue. The active-site Schiff-base intermediate with dihydroxyacetone-P is Lys260. Ser302–Gly304 serves as a coordination point for substrate. Lys387 carries the post-translational modification N6,N6,N6-trimethyllysine.

It belongs to the class I fructose-bisphosphate aldolase family. In terms of assembly, homotetramer. Can be trimethylated at Lys-387 by LSMT-L, but the trimethylation has no effect in vitro. In terms of processing, S-glutathionylated. As to expression, expressed in roots, and at low levels in rosettes leaves, cauline leaves, stems and flowers.

The protein resides in the plastid. The protein localises to the chloroplast. Its subcellular location is the plastoglobule. The catalysed reaction is beta-D-fructose 1,6-bisphosphate = D-glyceraldehyde 3-phosphate + dihydroxyacetone phosphate. Its pathway is carbohydrate degradation; glycolysis; D-glyceraldehyde 3-phosphate and glycerone phosphate from D-glucose: step 4/4. Functionally, plays a key role in glycolysis and gluconeogenesis. The protein is Fructose-bisphosphate aldolase 3, chloroplastic of Arabidopsis thaliana (Mouse-ear cress).